We begin with the raw amino-acid sequence, 191 residues long: Protein Ves (191 aa).

This sequence belongs to the Ves family.

In Shigella flexneri serotype 5b (strain 8401), this protein is Protein Ves.